The chain runs to 241 residues: uncharacterized protein (241 aa).

3 disordered regions span residues 19 to 59 (ERDR…QQLG), 101 to 139 (VRRP…ASRS), and 152 to 182 (RGCR…KPCS). The segment covering 34-48 (ARGGRGLWTVGGGGS) has biased composition (gly residues). The span at 49–58 (PTETAESQQL) shows a compositional bias: polar residues. Over residues 106–118 (PSVPSPLPKPPVP) the composition is skewed to pro residues.

This is an uncharacterized protein from Homo sapiens (Human).